The following is a 452-amino-acid chain: La-related protein 1B (452 aa).

Positions 1–22 (MATTASSAANSASRFSIDSSIS) are enriched in low complexity. The tract at residues 1–251 (MATTASSAAN…GFSHRNYSGR (251 aa)) is disordered. The residue at position 2 (A2) is an N-acetylalanine. Residues 44–68 (LSLSQDDPFSAPSVSPPTGNNSSDY) show a composition bias toward polar residues. Low complexity-rich tracts occupy residues 99–117 (SWPA…SPSL), 136–163 (ATSN…VNNS), 171–185 (NNNT…NVSN), and 206–223 (SGNF…SYPR). Positions 225–236 (EGLHHGNRRNYE) are enriched in basic and acidic residues. Residues 237 to 247 (HGNQSGFSHRN) are compositionally biased toward polar residues. An HTH La-type RNA-binding domain is found at 328–417 (RNFDAILYNK…RGDWDKYLLP (90 aa)). The interval 419–452 (EPSRSGPAAGASNNASLVSQIESMTLSERSREGV) is disordered. The span at 422-434 (RSGPAAGASNNAS) shows a compositional bias: low complexity. The span at 435–445 (LVSQIESMTLS) shows a compositional bias: polar residues.

It belongs to the LARP family.

It is found in the cytoplasm. In terms of biological role, promotes leaf senescence. The chain is La-related protein 1B (LARP1B) from Arabidopsis thaliana (Mouse-ear cress).